Reading from the N-terminus, the 515-residue chain is Envelope glycoprotein (515 aa).

The signal sequence occupies residues 1-33 (MPKERRSRRRPQPIIRWVSLTLTLLALCQPIQT). Residues 34–435 (WRCSLSLGNQ…LGLTAWVRET (402 aa)) are Extracellular-facing. N-linked (GlcNAc...) asparagine; by host glycosylation is found at N129 and N203. A CXXC motif is present at residues 212–215 (CAIC). Intrachain disulfides connect C212/C215, C212/C392, and C384/C391. N230, N251, N256, N271, and N287 each carry an N-linked (GlcNAc...) asparagine; by host glycan. The tract at residues 304–324 (VAALTLGLALSVGLTGINVAV) is fusion peptide. Coiled-coil stretches lie at residues 330–376 (QRLT…WLYI) and 388–420 (NEPC…DWQW). An N-linked (GlcNAc...) asparagine; by host glycan is attached at N351. The tract at residues 365-381 (AQNRRGLDWLYIRLGFQ) is immunosuppression. A CX6CC motif is present at residues 384–392 (CPTINEPCC). The N-linked (GlcNAc...) asparagine; by host glycan is linked to N398. Residues 436–456 (IHSVLSLFLLALFLLFLAPCL) traverse the membrane as a helical segment. C455 carries the S-palmitoyl cysteine; by host lipid modification. The Cytoplasmic segment spans residues 457 to 515 (IKCLTSRLLKLLRQAPHFPEISFPPKPDSDYQALLPSAPEIYSHLSPTKPDYINLRPCP).

As to quaternary structure, the mature envelope protein (Env) consists of a trimer of SU-TM heterodimers attached by a labile interchain disulfide bond. Post-translationally, specific enzymatic cleavages in vivo yield mature proteins. Envelope glycoproteins are synthesized as an inactive precursor that is N-glycosylated and processed likely by host cell furin or by a furin-like protease in the Golgi to yield the mature SU and TM proteins. The cleavage site between SU and TM requires the minimal sequence [KR]-X-[KR]-R. The CXXC motif is highly conserved across a broad range of retroviral envelope proteins. It is thought to participate in the formation of a labile disulfide bond possibly with the CX6CC motif present in the transmembrane protein. Isomerization of the intersubunit disulfide bond to an SU intrachain disulfide bond is thought to occur upon receptor recognition in order to allow membrane fusion. In terms of processing, the transmembrane protein is palmitoylated.

Its subcellular location is the virion membrane. It is found in the host cell membrane. In terms of biological role, the surface protein (SU) attaches the virus to the host cell by binding to its receptor. This interaction triggers the refolding of the transmembrane protein (TM) and is thought to activate its fusogenic potential by unmasking its fusion peptide. Fusion occurs at the host cell plasma membrane. The transmembrane protein (TM) acts as a class I viral fusion protein. Under the current model, the protein has at least 3 conformational states: pre-fusion native state, pre-hairpin intermediate state, and post-fusion hairpin state. During viral and target cell membrane fusion, the coiled coil regions (heptad repeats) assume a trimer-of-hairpins structure, positioning the fusion peptide in close proximity to the C-terminal region of the ectodomain. The formation of this structure appears to drive apposition and subsequent fusion of viral and target cell membranes. Membranes fusion leads to delivery of the nucleocapsid into the cytoplasm. The chain is Envelope glycoprotein (env) from Bovine leukemia virus (isolate Belgium LB59) (BLV).